Here is a 637-residue protein sequence, read N- to C-terminus: 1-deoxy-D-xylulose-5-phosphate synthase (637 aa).

Residues His71 and 112–114 contribute to the thiamine diphosphate site; that span reads SHA. A Mg(2+)-binding site is contributed by Asp144. Thiamine diphosphate-binding positions include 145 to 146, Asn173, Tyr284, and Glu365; that span reads GA. Position 173 (Asn173) interacts with Mg(2+).

The protein belongs to the transketolase family. DXPS subfamily. Homodimer. Mg(2+) serves as cofactor. The cofactor is thiamine diphosphate.

The enzyme catalyses D-glyceraldehyde 3-phosphate + pyruvate + H(+) = 1-deoxy-D-xylulose 5-phosphate + CO2. Its pathway is metabolic intermediate biosynthesis; 1-deoxy-D-xylulose 5-phosphate biosynthesis; 1-deoxy-D-xylulose 5-phosphate from D-glyceraldehyde 3-phosphate and pyruvate: step 1/1. Its function is as follows. Catalyzes the acyloin condensation reaction between C atoms 2 and 3 of pyruvate and glyceraldehyde 3-phosphate to yield 1-deoxy-D-xylulose-5-phosphate (DXP). The chain is 1-deoxy-D-xylulose-5-phosphate synthase from Mycolicibacterium gilvum (strain PYR-GCK) (Mycobacterium gilvum (strain PYR-GCK)).